We begin with the raw amino-acid sequence, 760 residues long: DNA-directed RNA polymerase subunit beta' (760 aa).

Zn(2+) contacts are provided by cysteine 76, cysteine 78, cysteine 90, and cysteine 93. Mg(2+) is bound by residues aspartate 594, aspartate 596, and aspartate 598.

This sequence belongs to the RNA polymerase beta' chain family. RpoC1 subfamily. As to quaternary structure, in plastids the minimal PEP RNA polymerase catalytic core is composed of four subunits: alpha, beta, beta', and beta''. When a (nuclear-encoded) sigma factor is associated with the core the holoenzyme is formed, which can initiate transcription. Requires Mg(2+) as cofactor. Zn(2+) serves as cofactor.

The protein localises to the plastid. Its subcellular location is the chloroplast. The catalysed reaction is RNA(n) + a ribonucleoside 5'-triphosphate = RNA(n+1) + diphosphate. Its function is as follows. DNA-dependent RNA polymerase catalyzes the transcription of DNA into RNA using the four ribonucleoside triphosphates as substrates. In Bigelowiella natans (Pedinomonas minutissima), this protein is DNA-directed RNA polymerase subunit beta'.